Here is a 202-residue protein sequence, read N- to C-terminus: Small ribosomal subunit protein uS2 (202 aa).

Belongs to the universal ribosomal protein uS2 family.

This chain is Small ribosomal subunit protein uS2, found in Methanocorpusculum labreanum (strain ATCC 43576 / DSM 4855 / Z).